The following is a 636-amino-acid chain: 1-deoxy-D-xylulose-5-phosphate synthase (636 aa).

Residues histidine 74 and 115–117 (AHS) each bind thiamine diphosphate. Mg(2+) is bound at residue aspartate 146. Thiamine diphosphate-binding positions include 147–148 (GS), asparagine 176, tyrosine 287, and glutamate 369. Residue asparagine 176 coordinates Mg(2+).

This sequence belongs to the transketolase family. DXPS subfamily. Homodimer. It depends on Mg(2+) as a cofactor. Thiamine diphosphate is required as a cofactor.

The enzyme catalyses D-glyceraldehyde 3-phosphate + pyruvate + H(+) = 1-deoxy-D-xylulose 5-phosphate + CO2. Its pathway is metabolic intermediate biosynthesis; 1-deoxy-D-xylulose 5-phosphate biosynthesis; 1-deoxy-D-xylulose 5-phosphate from D-glyceraldehyde 3-phosphate and pyruvate: step 1/1. Catalyzes the acyloin condensation reaction between C atoms 2 and 3 of pyruvate and glyceraldehyde 3-phosphate to yield 1-deoxy-D-xylulose-5-phosphate (DXP). The chain is 1-deoxy-D-xylulose-5-phosphate synthase from Polaromonas naphthalenivorans (strain CJ2).